We begin with the raw amino-acid sequence, 181 residues long: Shikimate kinase 2 (181 aa).

G12–T17 lines the ATP pocket. Mg(2+) is bound by residues T16 and D32. Residues D34, R58, and G79 each contribute to the substrate site. The segment at E112–K126 is LID domain. An ATP-binding site is contributed by R120. Substrate is bound at residue R139.

The protein belongs to the shikimate kinase family. AroL subfamily. As to quaternary structure, monomer. It depends on Mg(2+) as a cofactor.

Its subcellular location is the cytoplasm. It carries out the reaction shikimate + ATP = 3-phosphoshikimate + ADP + H(+). It participates in metabolic intermediate biosynthesis; chorismate biosynthesis; chorismate from D-erythrose 4-phosphate and phosphoenolpyruvate: step 5/7. Its function is as follows. Catalyzes the specific phosphorylation of the 3-hydroxyl group of shikimic acid using ATP as a cosubstrate. This is Shikimate kinase 2 from Salmonella heidelberg (strain SL476).